The following is a 256-amino-acid chain: Sugar fermentation stimulation protein homolog (256 aa).

Positions 128–141 (TGSTDTSFSGTPPT) are enriched in low complexity. Residues 128 to 149 (TGSTDTSFSGTPPTNTEPANTK) are disordered.

This sequence belongs to the SfsA family.

The protein is Sugar fermentation stimulation protein homolog of Shewanella sediminis (strain HAW-EB3).